The following is a 272-amino-acid chain: Zinc transporter ZupT (272 aa).

Transmembrane regions (helical) follow at residues 11–31, 40–60, 76–96, 126–146, 158–178, 189–209, 211–231, and 250–270; these read IALA…LMVV, LLAF…LTEI, LGFT…MVID, LMTA…TFFA, AFAI…PVYF, ASLL…LALF, VLSD…MVFL, and VYGL…FRFA. The Fe(2+) site is built by Asn-136 and Glu-139. Residues Glu-139 and His-164 each coordinate Zn(2+). 3 residues coordinate Fe(2+): Asn-165, Glu-168, and Glu-197. Glu-168 serves as a coordination point for Zn(2+).

It belongs to the ZIP transporter (TC 2.A.5) family. ZupT subfamily.

It localises to the cell inner membrane. The enzyme catalyses Zn(2+)(in) = Zn(2+)(out). Functionally, mediates zinc uptake. May also transport other divalent cations. The chain is Zinc transporter ZupT from Xanthomonas axonopodis pv. citri (strain 306).